Here is a 138-residue protein sequence, read N- to C-terminus: Prefoldin subunit alpha (138 aa).

It belongs to the prefoldin subunit alpha family. As to quaternary structure, heterohexamer of two alpha and four beta subunits.

It is found in the cytoplasm. In terms of biological role, molecular chaperone capable of stabilizing a range of proteins. Seems to fulfill an ATP-independent, HSP70-like function in archaeal de novo protein folding. In Methanococcoides burtonii (strain DSM 6242 / NBRC 107633 / OCM 468 / ACE-M), this protein is Prefoldin subunit alpha.